A 699-amino-acid polypeptide reads, in one-letter code: Keratinocyte proline-rich protein (699 aa).

Phosphoserine is present on Ser-436. 2 stretches are compositionally biased toward pro residues: residues Pro-448–Glu-477 and Asp-513–Glu-533. Positions Pro-448–Glu-533 are disordered.

As to expression, expressed in the stratified squamous epithelial layers of the skin, esophagus and tongue.

Its subcellular location is the cytoplasm. This chain is Keratinocyte proline-rich protein (Kprp), found in Rattus norvegicus (Rat).